Here is a 617-residue protein sequence, read N- to C-terminus: AUGMIN subunit 3 (617 aa).

Coiled-coil stretches lie at residues D107 to L140, L314 to K334, and A481 to L504.

Belongs to the HAUS3 family. As to quaternary structure, part of the augmin complex composed of 8 subunits. The complex acts on microtubules and interacts with gamma-tubulin in spindles and the phragmoplast. Interacts with AUG1.

It is found in the cytoplasm. It localises to the cytoskeleton. The protein resides in the spindle. The protein localises to the phragmoplast. Functionally, involved in microtubules reorganization during spindle and phragmoplast development. Required for gamma-tubulin localization during mitosis. This chain is AUGMIN subunit 3, found in Arabidopsis thaliana (Mouse-ear cress).